Reading from the N-terminus, the 190-residue chain is MLTRFTRLRPILQLRYLAQNSHIEEEYFEELEPTGIISSHETSQEPPKRTGFRSQNLSEDADFVENVVGALTDQRAKDVFVVKSEETEMTPYTHKIICSAFNSRQASAISENLRSLLKIDGVSNGSMSHARRSTKRSNGWYVSEVERVQVHVMSEECREKYDLEAIWAGDDRILDEIDEEKQKILLPPRR.

This sequence belongs to the Iojap/RsfS family.

This is an uncharacterized protein from Caenorhabditis elegans.